A 598-amino-acid polypeptide reads, in one-letter code: Vacuolin-A (598 aa).

Residues 482-539 (IKTTEARLKAETDNIALEQRNKAIISESQAKLSSAQREAESLLITAEAQKKASELQGE) adopt a coiled-coil conformation.

It belongs to the vacuolin family.

The protein resides in the endosome membrane. Its subcellular location is the lysosome. The chain is Vacuolin-A (vacA) from Dictyostelium discoideum (Social amoeba).